Here is a 509-residue protein sequence, read N- to C-terminus: Maturase K (509 aa).

Belongs to the intron maturase 2 family. MatK subfamily.

The protein localises to the plastid. It localises to the chloroplast. Its function is as follows. Usually encoded in the trnK tRNA gene intron. Probably assists in splicing its own and other chloroplast group II introns. The polypeptide is Maturase K (Amentotaxus argotaenia (Chinese flowering yew)).